We begin with the raw amino-acid sequence, 376 residues long: Dihydroorotate dehydrogenase (quinone) (376 aa).

Residues 74-78 (AGFDK) and threonine 98 contribute to the FMN site. Position 78 (lysine 78) interacts with substrate. Residue 123–127 (NHMGF) coordinates substrate. Residues asparagine 152 and asparagine 185 each coordinate FMN. A substrate-binding site is contributed by asparagine 185. Residue serine 188 is the Nucleophile of the active site. Asparagine 190 is a binding site for substrate. 2 residues coordinate FMN: lysine 223 and threonine 251. 252-253 (NT) contacts substrate. FMN contacts are provided by residues glycine 280, glycine 309, and 330–331 (YT). The tract at residues 352–376 (RNPAPSSPERMPTGIQSGRKIVMDP) is disordered.

Belongs to the dihydroorotate dehydrogenase family. Type 2 subfamily. Monomer. The cofactor is FMN.

The protein localises to the cell membrane. It catalyses the reaction (S)-dihydroorotate + a quinone = orotate + a quinol. It functions in the pathway pyrimidine metabolism; UMP biosynthesis via de novo pathway; orotate from (S)-dihydroorotate (quinone route): step 1/1. Its function is as follows. Catalyzes the conversion of dihydroorotate to orotate with quinone as electron acceptor. The polypeptide is Dihydroorotate dehydrogenase (quinone) (Synechococcus sp. (strain JA-3-3Ab) (Cyanobacteria bacterium Yellowstone A-Prime)).